The primary structure comprises 273 residues: MATYFVGDIQGCLDELLLLLDQVSFDKEKDQLWLTGDLVARGPKSLETLRFVKSLDKAAVTILGNHDLHLLAVSQGISRIKEKDKTASIFTAPDSEELLTWLRHQPLLATHAQHNIVMTHAGISPQWNIETATECAREIESVLVSDKWVWLLENMYENQPDLWQSDLTGINRYRYIINAFTRMRFCYPDGRLDMECKQPPQELSSDDKEKLIPWFDLKSRCPLSHTVIFGHWAALMGYENNGVIALDTGCVWGEYMTMYRVDDGQYFTQKAIS.

It belongs to the Ap4A hydrolase family.

The catalysed reaction is P(1),P(4)-bis(5'-adenosyl) tetraphosphate + H2O = 2 ADP + 2 H(+). Hydrolyzes diadenosine 5',5'''-P1,P4-tetraphosphate to yield ADP. The polypeptide is Bis(5'-nucleosyl)-tetraphosphatase, symmetrical (Aliivibrio salmonicida (strain LFI1238) (Vibrio salmonicida (strain LFI1238))).